Reading from the N-terminus, the 2643-residue chain is Ankyrin repeat domain-containing protein 11 (2643 aa).

2 disordered regions span residues 1–90 and 128–170; these read MPKG…KEPV and SANS…RGET. 2 stretches are compositionally biased toward basic and acidic residues: residues 21–54 and 69–90; these read MVEK…VRER and EQKD…KEPV. The segment covering 128–155 has biased composition (polar residues); it reads SANSPVDTTPKHPSQSTVCQKGTPNSAS. The segment covering 156–170 has biased composition (basic and acidic residues); the sequence is KTKDKVNKRNERGET. 4 ANK repeats span residues 167 to 196, 200 to 229, 233 to 262, and 266 to 292; these read RGET…DVNV, AGWT…EVNT, DDDT…NPQQ, and KGET…YTSS. Ser-276 carries the post-translational modification Phosphoserine. The disordered stretch occupies residues 289 to 365; that stretch reads YTSSEESSTE…DRVPPVDDKH (77 aa). Over residues 295 to 305 the composition is skewed to acidic residues; that stretch reads SSTESSEEEDA. Residues 309 to 320 show a composition bias toward polar residues; that stretch reads APSSSVDGNNTD. Composition is skewed to basic and acidic residues over residues 322-335 and 356-365; these read EFEK…KNPE and DRVPPVDDKH. The residue at position 408 (Ser-408) is a Phosphoserine. The residue at position 410 (Thr-410) is a Phosphothreonine. Position 411 is a phosphoserine (Ser-411). Disordered regions lie at residues 423 to 504, 517 to 651, and 727 to 805; these read GEKL…CLKG, SLSA…GQCS, and DANK…DKEK. The segment covering 438–451 has biased composition (basic and acidic residues); that stretch reads KARESSSSRQQKEK. The span at 452 to 462 shows a compositional bias: basic residues; sequence NKLKKKRKKET. Residues 463-475 are compositionally biased toward basic and acidic residues; that stretch reads KGKEVRFGKRSDK. The segment covering 484–494 has biased composition (acidic residues); the sequence is ESSESEEDDGD. Residues 517-528 are compositionally biased toward low complexity; that stretch reads SLSASSTSSHGS. Residues 537–550 show a composition bias toward basic and acidic residues; sequence GHTDQHTKHWRTDN. Polar residues predominate over residues 557–574; it reads PAWSEVSSLSDSSRTGLT. Positions 575-588 are enriched in low complexity; sequence SESDCSSEGSSVES. Composition is skewed to basic residues over residues 591–602 and 633–646; these read PTRRKQEHRKRG and VKKH…KHKE. Ser-838 is subject to Phosphoserine. Basic and acidic residues-rich tracts occupy residues 918-931 and 938-962; these read KNSE…EKHK and SEKD…IRSE. 3 disordered regions span residues 918-962, 977-1037, and 1051-1074; these read KNSE…IRSE, SFKD…STLD, and EKKD…FDQL. Position 1070 is a phosphoserine (Ser-1070). Thr-1111 carries the phosphothreonine modification. Ser-1114 is subject to Phosphoserine. 2 disordered regions span residues 1114–1388 and 1420–1711; these read SEDE…KDAS and LFSS…TPSC. 8 stretches are compositionally biased toward basic and acidic residues: residues 1133–1297, 1326–1343, 1355–1388, 1420–1444, 1464–1535, 1546–1564, 1577–1587, and 1595–1640; these read DTQR…DKIS, AEDK…LREK, KSHE…KDAS, LFSS…KELK, RERW…KGDS, VPSR…KLLG, LSQKDLEIEER, and MKQM…KVKE. Position 1676 is a phosphoserine (Ser-1676). Residues 1678-1695 are compositionally biased toward polar residues; sequence RTEQSRPTGVPTPTSVVS. 2 positions are modified to phosphoserine: Ser-1777 and Ser-1832. Phosphotyrosine is present on residues Tyr-1835 and Tyr-1836. Ser-1837 and Ser-1844 each carry phosphoserine. Disordered regions lie at residues 1863–1900, 1981–2027, and 2111–2386; these read PPDS…GLPL, SPKH…EVKD, and HEAF…STQQ. Ser-1981 and Ser-2139 each carry phosphoserine. 2 stretches are compositionally biased toward pro residues: residues 2150-2160 and 2175-2184; these read PVPPAESPPGP and EEPPAPPPQE. The segment covering 2273–2284 has biased composition (low complexity); that stretch reads SAEASCVVAAAE. Residues 2297–2315 are compositionally biased toward basic and acidic residues; that stretch reads PEPKPTSEVPKAPKVEEVP. Residues 2349–2643 are important for protein degradation; it reads AKGRASEEED…VNDDFVLLPA (295 aa). Low complexity predominate over residues 2371–2386; the sequence is RSSQQLQQQLNTSTQQ.

In terms of assembly, interacts with the PAS region of the p160 coactivators. Subject to proteasomal degradation which is probably essential to regulate its activity.

It is found in the nucleus. Functionally, chromatin regulator which modulates histone acetylation and gene expression in neural precursor cells. May recruit histone deacetylases (HDACs) to the p160 coactivators/nuclear receptor complex to inhibit ligand-dependent transactivation. Has a role in proliferation and development of cortical neural precursors. May also regulate bone homeostasis. The protein is Ankyrin repeat domain-containing protein 11 of Mus musculus (Mouse).